Consider the following 245-residue polypeptide: Triosephosphate isomerase (245 aa).

9-11 (NWK) contributes to the substrate binding site. The active-site Electrophile is the H92. E164 acts as the Proton acceptor in catalysis. Substrate contacts are provided by residues G170, S209, and 230-231 (GG).

Belongs to the triosephosphate isomerase family. In terms of assembly, homodimer.

The protein localises to the cytoplasm. The catalysed reaction is D-glyceraldehyde 3-phosphate = dihydroxyacetone phosphate. Its pathway is carbohydrate biosynthesis; gluconeogenesis. It functions in the pathway carbohydrate degradation; glycolysis; D-glyceraldehyde 3-phosphate from glycerone phosphate: step 1/1. Functionally, involved in the gluconeogenesis. Catalyzes stereospecifically the conversion of dihydroxyacetone phosphate (DHAP) to D-glyceraldehyde-3-phosphate (G3P). The protein is Triosephosphate isomerase of Cupriavidus pinatubonensis (strain JMP 134 / LMG 1197) (Cupriavidus necator (strain JMP 134)).